Reading from the N-terminus, the 428-residue chain is Enolase (428 aa).

(2R)-2-phosphoglycerate is bound at residue Gln167. Glu209 serves as the catalytic Proton donor. Asp246, Glu288, and Asp315 together coordinate Mg(2+). 4 residues coordinate (2R)-2-phosphoglycerate: Lys340, Arg369, Ser370, and Lys391. Catalysis depends on Lys340, which acts as the Proton acceptor.

It belongs to the enolase family. Component of the RNA degradosome, a multiprotein complex involved in RNA processing and mRNA degradation. The cofactor is Mg(2+).

It localises to the cytoplasm. It is found in the secreted. The protein localises to the cell surface. It catalyses the reaction (2R)-2-phosphoglycerate = phosphoenolpyruvate + H2O. It participates in carbohydrate degradation; glycolysis; pyruvate from D-glyceraldehyde 3-phosphate: step 4/5. Catalyzes the reversible conversion of 2-phosphoglycerate (2-PG) into phosphoenolpyruvate (PEP). It is essential for the degradation of carbohydrates via glycolysis. The chain is Enolase from Pseudomonas savastanoi pv. phaseolicola (strain 1448A / Race 6) (Pseudomonas syringae pv. phaseolicola (strain 1448A / Race 6)).